We begin with the raw amino-acid sequence, 226 residues long: Ribosomal RNA small subunit methyltransferase G (226 aa).

S-adenosyl-L-methionine-binding positions include glycine 95, leucine 100, 146 to 147, and arginine 159; that span reads VE.

This sequence belongs to the methyltransferase superfamily. RNA methyltransferase RsmG family.

It is found in the cytoplasm. It catalyses the reaction guanosine(527) in 16S rRNA + S-adenosyl-L-methionine = N(7)-methylguanosine(527) in 16S rRNA + S-adenosyl-L-homocysteine. Specifically methylates the N7 position of guanine in position 527 of 16S rRNA. The protein is Ribosomal RNA small subunit methyltransferase G of Acidovorax ebreus (strain TPSY) (Diaphorobacter sp. (strain TPSY)).